Here is a 261-residue protein sequence, read N- to C-terminus: 1-(5-phosphoribosyl)-5-[(5-phosphoribosylamino)methylideneamino] imidazole-4-carboxamide isomerase (261 aa).

Residue Asp15 is the Proton acceptor of the active site. Catalysis depends on Asp136, which acts as the Proton donor.

Belongs to the HisA/HisF family.

The protein resides in the cytoplasm. It carries out the reaction 1-(5-phospho-beta-D-ribosyl)-5-[(5-phospho-beta-D-ribosylamino)methylideneamino]imidazole-4-carboxamide = 5-[(5-phospho-1-deoxy-D-ribulos-1-ylimino)methylamino]-1-(5-phospho-beta-D-ribosyl)imidazole-4-carboxamide. Its pathway is amino-acid biosynthesis; L-histidine biosynthesis; L-histidine from 5-phospho-alpha-D-ribose 1-diphosphate: step 4/9. This Synechococcus sp. (strain JA-3-3Ab) (Cyanobacteria bacterium Yellowstone A-Prime) protein is 1-(5-phosphoribosyl)-5-[(5-phosphoribosylamino)methylideneamino] imidazole-4-carboxamide isomerase.